Reading from the N-terminus, the 1228-residue chain is Structural maintenance of chromosomes protein 1 (1228 aa).

32–39 (GPNGAGKS) lines the ATP pocket. The stretch at 197-510 (NKKRGINAEL…ESKQDAKKRE (314 aa)) forms a coiled coil. In terms of domain architecture, SMC hinge spans 522-635 (VKGRIIDLCT…CDSMTVARDL (114 aa)). 3 coiled-coil regions span residues 710 to 783 (KLHS…KIFS), 814 to 926 (EFTK…EIDR), and 984 to 1068 (VEVD…KRLQ).

The protein belongs to the SMC family. SMC1 subfamily. Cohesin complexes are composed of the psm1/smc1 and psm3/smc3 heterodimer attached via their SMC hinge domain, rad21/scc1 which link them, and psc3/scc3, which interacts with rad21.

The protein resides in the nucleus. Its subcellular location is the chromosome. Its function is as follows. Involved in chromosome cohesion during cell cycle and in DNA repair. Central component of cohesin complex. The cohesin complex is required for the cohesion of sister chromatids after DNA replication. The cohesin complex apparently forms a large proteinaceous ring within which sister chromatids can be trapped. At anaphase, the complex is cleaved and dissociates from chromatin, allowing sister chromatids to segregate. The sequence is that of Structural maintenance of chromosomes protein 1 (psm1) from Schizosaccharomyces pombe (strain 972 / ATCC 24843) (Fission yeast).